Here is a 432-residue protein sequence, read N- to C-terminus: Tyrosine-protein phosphatase non-receptor type 1 (432 aa).

At M1 the chain carries N-acetylmethionine. The Tyrosine-protein phosphatase domain maps to 3-277 (MEKEFEQIDK…RFSYLAVIEG (275 aa)). Position 20 is a phosphotyrosine (Y20). The residue at position 50 (S50) is a Phosphoserine; by PKB/AKT1, CLK1 and CLK2. Residue Y66 is modified to Phosphotyrosine; by EGFR. Substrate-binding positions include D181 and 215–221 (CSAGIGR). C215 acts as the Phosphocysteine intermediate in catalysis. Position 215 is a cysteine persulfide (C215). C215 is subject to S-nitrosocysteine; in reversibly inhibited form. Residues S242 and S243 each carry the phosphoserine; by CLK1 and CLK2 modification. Q262 provides a ligand contact to substrate. The interval 297–322 (EDLEPPPEHVPPPPRPPKRTLEPHNG) is disordered. 3 positions are modified to phosphoserine: S335, S362, and S364. The disordered stretch occupies residues 350 to 402 (SRAPSIAVHSMSSMSQDTEVRKRMVGGGLQSAQASVPTEEELSPTEEEQKAHR). T367 carries the post-translational modification Phosphothreonine.

It belongs to the protein-tyrosine phosphatase family. Non-receptor class 1 subfamily. As to quaternary structure, interacts with EPHA3 (phosphorylated); dephosphorylates EPHA3 and may regulate its trafficking and function. Interacts with MET. Interacts with NCK1. In terms of processing, ser-50 is the major site of phosphorylation as compared to Ser-242 and Ser-243. Activated by phosphorylation at Ser-50. S-nitrosylation of Cys-215 inactivates the enzyme activity. Post-translationally, sulfhydration at Cys-215 following endoplasmic reticulum stress inactivates the enzyme activity, promoting EIF2AK3/PERK activity. As to expression, found in several tissues including central nervous system, liver and kidney. A high level of expression was found in the hippocampus.

It is found in the endoplasmic reticulum membrane. It carries out the reaction O-phospho-L-tyrosyl-[protein] + H2O = L-tyrosyl-[protein] + phosphate. Functionally, tyrosine-protein phosphatase which acts as a regulator of endoplasmic reticulum unfolded protein response. Mediates dephosphorylation of EIF2AK3/PERK; inactivating the protein kinase activity of EIF2AK3/PERK. May play an important role in CKII- and p60c-src-induced signal transduction cascades. May regulate the EFNA5-EPHA3 signaling pathway which modulates cell reorganization and cell-cell repulsion. May also regulate the hepatocyte growth factor receptor signaling pathway through dephosphorylation of MET. This Rattus norvegicus (Rat) protein is Tyrosine-protein phosphatase non-receptor type 1 (Ptpn1).